The following is a 352-amino-acid chain: Anthranilate phosphoribosyltransferase (352 aa).

Residues G96, 99–100 (GS), S104, 106–109 (NIST), 124–132 (KHGNRSVSS), and S136 each bind 5-phospho-alpha-D-ribose 1-diphosphate. Position 96 (G96) interacts with anthranilate. S108 is a Mg(2+) binding site. Position 127 (N127) interacts with anthranilate. R182 is a binding site for anthranilate. Mg(2+) contacts are provided by D241 and E242.

It belongs to the anthranilate phosphoribosyltransferase family. In terms of assembly, homodimer. Requires Mg(2+) as cofactor.

The catalysed reaction is N-(5-phospho-beta-D-ribosyl)anthranilate + diphosphate = 5-phospho-alpha-D-ribose 1-diphosphate + anthranilate. It functions in the pathway amino-acid biosynthesis; L-tryptophan biosynthesis; L-tryptophan from chorismate: step 2/5. Catalyzes the transfer of the phosphoribosyl group of 5-phosphorylribose-1-pyrophosphate (PRPP) to anthranilate to yield N-(5'-phosphoribosyl)-anthranilate (PRA). The protein is Anthranilate phosphoribosyltransferase of Syntrophotalea carbinolica (strain DSM 2380 / NBRC 103641 / GraBd1) (Pelobacter carbinolicus).